The sequence spans 319 residues: Protease HtpX homolog (319 aa).

The next 2 helical transmembrane spans lie at 6-26 (TAML…VIGG) and 28-48 (GGMM…YWNS). Histidine 130 contacts Zn(2+). Glutamate 131 is a catalytic residue. Histidine 134 is a Zn(2+) binding site. Helical transmembrane passes span 145 to 165 (LTAT…FFGG) and 172 to 192 (PLGF…AMLV). Position 201 (glutamate 201) interacts with Zn(2+). Residues 279–319 (REMSAGSTAPARPDNAVRRSRSVPKTGWGRGGSEPPKGPWS) form a disordered region.

The protein belongs to the peptidase M48B family. Zn(2+) is required as a cofactor.

Its subcellular location is the cell inner membrane. The sequence is that of Protease HtpX homolog from Sinorhizobium fredii (strain NBRC 101917 / NGR234).